We begin with the raw amino-acid sequence, 514 residues long: Mitochondrial-processing peptidase subunit alpha (514 aa).

Residues 1-55 constitute a mitochondrion transit peptide; that stretch reads MLLRKSIPYIKICRDISASVRNNKEIAQKLPLSVPLPMENNSKSIEKGCPPMGRN.

Belongs to the peptidase M16 family. In terms of assembly, heterodimer of mppa-1 (alpha) and mppb-1 (beta) subunits, forming the mitochondrial processing protease (MPP) in which mppa-1 is involved in substrate recognition and binding and mppb-1 is the catalytic subunit.

Its subcellular location is the mitochondrion matrix. Its function is as follows. Substrate recognition and binding subunit of the essential mitochondrial processing protease (MPP), which cleaves the mitochondrial sequence off newly imported precursors proteins. The protein is Mitochondrial-processing peptidase subunit alpha of Caenorhabditis elegans.